Consider the following 345-residue polypeptide: NADH-quinone oxidoreductase subunit H 1 (345 aa).

A run of 9 helical transmembrane segments spans residues 11-31 (IILTIAAQGLLVIAFVMISLL), 50-70 (PNVVGAFGLLQTVADAAKYIF), 84-104 (FFLAPLISFVLAVLAWAVIPF), 115-135 (VAILFVFAASSLEVYGVIMGG), 161-181 (LGLIIIGIIISTGSMNLSHIV), 187-207 (AFGLFNWYWLPHLPMVALFFI), 248-268 (YIAIFLMCALMSLLFFGGWLS), 277-297 (VFWMVAKMAFFFFLFAMVKAI), and 309-329 (IGWKVFLPFSLGWVVLVAFLA).

It belongs to the complex I subunit 1 family. NDH-1 is composed of 14 different subunits. Subunits NuoA, H, J, K, L, M, N constitute the membrane sector of the complex.

It localises to the cell inner membrane. It carries out the reaction a quinone + NADH + 5 H(+)(in) = a quinol + NAD(+) + 4 H(+)(out). In terms of biological role, NDH-1 shuttles electrons from NADH, via FMN and iron-sulfur (Fe-S) centers, to quinones in the respiratory chain. The immediate electron acceptor for the enzyme in this species is believed to be ubiquinone. Couples the redox reaction to proton translocation (for every two electrons transferred, four hydrogen ions are translocated across the cytoplasmic membrane), and thus conserves the redox energy in a proton gradient. This subunit may bind ubiquinone. The sequence is that of NADH-quinone oxidoreductase subunit H 1 from Cereibacter sphaeroides (strain ATCC 17023 / DSM 158 / JCM 6121 / CCUG 31486 / LMG 2827 / NBRC 12203 / NCIMB 8253 / ATH 2.4.1.) (Rhodobacter sphaeroides).